Reading from the N-terminus, the 729-residue chain is E3 ubiquitin-protein ligase Trim36 (729 aa).

Residues 33 to 84 form an RING-type; degenerate zinc finger; that stretch reads CPACKELFTHPLILPCQHSVCHKCVKELLLSLDDSFNDVASDSSNQSSPRLR. B box-type zinc fingers lie at residues 154-192 and 207-249; these read AIMCDLCKPPPQESTKSCMDCSASYCNECFKIYHPWGTV and PKVL…VTTM. Cysteine 212, histidine 215, cysteine 235, and histidine 241 together coordinate Zn(2+). A coiled-coil region spans residues 271–302; it reads ESQVKSQISELNLLMKETECNGERAKEEALAH. The 58-residue stretch at 356–413 folds into the COS domain; sequence LKETDQSCFVQTAKQLHLRIQKATESLKSFRPAAQASFEDYVVNISKQTEVLGELSFF. Positions 416–511 constitute a Fibronectin type-III domain; it reads GIDIPEINEE…RELILHTPPA (96 aa). In terms of domain architecture, B30.2/SPRY spans 509–723; that stretch reads PPAPVFSFLF…LEEAITAKYL (215 aa). The disordered stretch occupies residues 606–626; it reads RDAASPRYEQDSGHDSGSEDA. The span at 613–622 shows a compositional bias: basic and acidic residues; the sequence is YEQDSGHDSG.

The protein belongs to the TRIM/RBCC family. Interacts with CENPH. Expressed in testis. Strongly expressed in the neural tube region in 14.5 dpc embryos.

The protein localises to the cytoplasm. It is found in the cytoplasmic vesicle. It localises to the secretory vesicle. The protein resides in the acrosome. Its subcellular location is the cytoskeleton. The enzyme catalyses S-ubiquitinyl-[E2 ubiquitin-conjugating enzyme]-L-cysteine + [acceptor protein]-L-lysine = [E2 ubiquitin-conjugating enzyme]-L-cysteine + N(6)-ubiquitinyl-[acceptor protein]-L-lysine.. In terms of biological role, E3 ubiquitin-protein ligase which mediates ubiquitination and subsequent proteasomal degradation of target proteins. Involved in chromosome segregation and cell cycle regulation. May play a role in the acrosome reaction and fertilization. This Mus musculus (Mouse) protein is E3 ubiquitin-protein ligase Trim36 (Trim36).